The primary structure comprises 278 residues: Pantothenate synthetase (278 aa).

30 to 37 (MGFLHEGH) provides a ligand contact to ATP. The Proton donor role is filled by His-37. Gln-61 is a binding site for (R)-pantoate. Residue Gln-61 participates in beta-alanine binding. 147–150 (GQKD) is an ATP binding site. Residue Gln-153 coordinates (R)-pantoate. Residues Val-176 and 184–187 (LSSR) each bind ATP.

Belongs to the pantothenate synthetase family. As to quaternary structure, homodimer.

Its subcellular location is the cytoplasm. It carries out the reaction (R)-pantoate + beta-alanine + ATP = (R)-pantothenate + AMP + diphosphate + H(+). The protein operates within cofactor biosynthesis; (R)-pantothenate biosynthesis; (R)-pantothenate from (R)-pantoate and beta-alanine: step 1/1. Catalyzes the condensation of pantoate with beta-alanine in an ATP-dependent reaction via a pantoyl-adenylate intermediate. The protein is Pantothenate synthetase of Thermosipho africanus (strain TCF52B).